The following is a 118-amino-acid chain: Large ribosomal subunit protein bL20 (118 aa).

It belongs to the bacterial ribosomal protein bL20 family.

Binds directly to 23S ribosomal RNA and is necessary for the in vitro assembly process of the 50S ribosomal subunit. It is not involved in the protein synthesizing functions of that subunit. This is Large ribosomal subunit protein bL20 from Methylibium petroleiphilum (strain ATCC BAA-1232 / LMG 22953 / PM1).